Reading from the N-terminus, the 87-residue chain is Cell division topological specificity factor (87 aa).

This sequence belongs to the MinE family.

In terms of biological role, prevents the cell division inhibition by proteins MinC and MinD at internal division sites while permitting inhibition at polar sites. This ensures cell division at the proper site by restricting the formation of a division septum at the midpoint of the long axis of the cell. The sequence is that of Cell division topological specificity factor from Vibrio vulnificus (strain CMCP6).